The primary structure comprises 312 residues: Olfactory receptor 10C1 (312 aa).

Topologically, residues 1-24 are extracellular; it reads MSANTSMVTEFLLLGFSHLADLQG. A glycan (N-linked (GlcNAc...) asparagine) is linked at asparagine 4. The chain crosses the membrane as a helical span at residues 25–45; sequence LLFSVFLTIYLLTVAGNFLIV. Residues 46 to 53 lie on the Cytoplasmic side of the membrane; that stretch reads VLVSTDAA. A helical membrane pass occupies residues 54 to 74; it reads LQSPMYFFLRTLSALEIGYTS. Topologically, residues 75 to 98 are extracellular; sequence VTVPLLLHHLLTGRRHISRSGCAL. Cysteine 96 and cysteine 188 form a disulfide bridge. Residues 99 to 119 traverse the membrane as a helical segment; sequence QMFFFLFFGATECCLLAAMAY. Over 120–138 the chain is Cytoplasmic; it reads DRYAAICEPLRYPLLLSHR. A helical membrane pass occupies residues 139–159; the sequence is VCLQLAGSAWACGVLVGLGHT. The Extracellular segment spans residues 160–196; it reads PFIFSLPFCGPNTIPQFFCEIQPVLQLVCGDTSLNEL. Residues 197 to 216 traverse the membrane as a helical segment; that stretch reads QIILATALLILCPFGLILGS. The Cytoplasmic segment spans residues 217-236; the sequence is YGRILVTIFRIPSVAGRRKA. Residues 237 to 257 form a helical membrane-spanning segment; that stretch reads FSTCSSHLIMVSLFYGTALFI. Over 258–270 the chain is Extracellular; that stretch reads YIRPKASYDPATD. A helical membrane pass occupies residues 271-291; it reads PLVSLFYAVVTPILNPIIYSL. Over 292-312 the chain is Cytoplasmic; that stretch reads RNTEVKAALKRTIQKTVPMEI.

The protein belongs to the G-protein coupled receptor 1 family.

The protein resides in the cell membrane. Odorant receptor. The chain is Olfactory receptor 10C1 (OR10C1) from Homo sapiens (Human).